Consider the following 491-residue polypeptide: Synaptotagmin-9 (491 aa).

Over Met1–Val52 the chain is Vesicular. The segment at Cys9–Gln31 is cysteine motif. A helical membrane pass occupies residues Ser53–Val73. At Ser74–Arg491 the chain is on the cytoplasmic side. Polar residues predominate over residues Ser91–Thr104. Residues Ser91–Asn147 form a disordered region. A compositionally biased stretch (acidic residues) spans Glu105–Leu116. Polar residues predominate over residues Met127–Gly144. A Phosphoserine modification is found at Ser177. C2 domains are found at residues Ala220–Lys341 and Asp352–His485. Ca(2+) contacts are provided by Asp251, Asp257, Asp309, Phe310, Asp311, Ser314, Asp317, Asp383, Asp389, Asp443, and Asp445.

The protein belongs to the synaptotagmin family. In terms of assembly, homodimer; disulfide-linked via the cysteine motif. Can also form heterodimers with SYT3, SYT6, SYT7 and SYT10. Interacts with DNAJC5 and SNAP25, but not with HSC70. The interaction with DNAJC5 is stimulated tenfold in presence of calcium while the interaction with SNAP25 is inhibited. Ca(2+) serves as cofactor.

Its subcellular location is the cytoplasmic vesicle. The protein resides in the secretory vesicle. It localises to the synaptic vesicle membrane. In terms of biological role, may be involved in Ca(2+)-dependent exocytosis of secretory vesicles through Ca(2+) and phospholipid binding to the C2 domain or may serve as Ca(2+) sensors in the process of vesicular trafficking and exocytosis. The chain is Synaptotagmin-9 (Syt9) from Mus musculus (Mouse).